Reading from the N-terminus, the 455-residue chain is Phosphoglucosamine mutase (455 aa).

Ser102 acts as the Phosphoserine intermediate in catalysis. 4 residues coordinate Mg(2+): Ser102, Asp241, Asp243, and Asp245. Ser102 carries the phosphoserine modification.

It belongs to the phosphohexose mutase family. The cofactor is Mg(2+). Activated by phosphorylation.

It catalyses the reaction alpha-D-glucosamine 1-phosphate = D-glucosamine 6-phosphate. Its function is as follows. Catalyzes the conversion of glucosamine-6-phosphate to glucosamine-1-phosphate. The chain is Phosphoglucosamine mutase from Legionella pneumophila (strain Corby).